The sequence spans 92 residues: Small ribosomal subunit protein uS19 (92 aa).

It belongs to the universal ribosomal protein uS19 family.

Its function is as follows. Protein S19 forms a complex with S13 that binds strongly to the 16S ribosomal RNA. In Borreliella afzelii (strain PKo) (Borrelia afzelii), this protein is Small ribosomal subunit protein uS19.